The following is a 670-amino-acid chain: Lebercilin-like protein (670 aa).

The interval 24 to 44 (RRSAECKRSPGTGDFSRNSNA) is disordered. 2 coiled-coil regions span residues 148-259 (LHKI…EREE) and 305-336 (AAQT…IKNI). The segment at 351 to 402 (YPKVSSTKSVQADRKSLPFTSMRHQGTQKSDVAPLTTKGKKATGNMDRKEKS) is disordered. Residues 368 to 380 (PFTSMRHQGTQKS) are compositionally biased toward polar residues. The stretch at 420 to 440 (EDSKTKYEDLSREEKHLEVQV) forms a coiled coil. Disordered regions lie at residues 495–520 (RSMQ…PLRQ), 533–594 (LHHG…FRDK), and 606–647 (GYVL…AFGD). The segment covering 546–558 (AGNTKYSHSTSKH) has biased composition (polar residues). Composition is skewed to basic and acidic residues over residues 560-572 (SNRE…HSDS), 585-594 (KAKDTTFRDK), and 621-632 (GSEEPLQSKESH). Polar residues predominate over residues 637–647 (SQASASNAFGD).

It belongs to the LCA5 family.

This is Lebercilin-like protein from Papio anubis (Olive baboon).